Consider the following 123-residue polypeptide: Probable ketoamine kinase in tonB 3'region (123 aa).

The Proton acceptor role is filled by aspartate 26.

The protein belongs to the fructosamine kinase family.

In terms of biological role, ketoamine kinase that phosphorylates ketoamines on the third carbon of the sugar moiety to generate ketoamine 3-phosphate. This is Probable ketoamine kinase in tonB 3'region from Klebsiella pneumoniae.